We begin with the raw amino-acid sequence, 350 residues long: Small ribosomal subunit biogenesis GTPase RsgA (350 aa).

Over residues 1-17 (MSKNKLSKGQQRRVNAN) the composition is skewed to polar residues. Residues 1 to 24 (MSKNKLSKGQQRRVNANHQRRLKT) are disordered. The region spanning 104–273 (TSVLTRPDFY…VIDSPGVREF (170 aa)) is the CP-type G domain. GTP-binding positions include 160-163 (NKID) and 214-222 (GQSGVGKSS). Residues C297, C302, H304, and C310 each contribute to the Zn(2+) site.

The protein belongs to the TRAFAC class YlqF/YawG GTPase family. RsgA subfamily. In terms of assembly, monomer. Associates with 30S ribosomal subunit, binds 16S rRNA. Zn(2+) serves as cofactor.

It localises to the cytoplasm. In terms of biological role, one of several proteins that assist in the late maturation steps of the functional core of the 30S ribosomal subunit. Helps release RbfA from mature subunits. May play a role in the assembly of ribosomal proteins into the subunit. Circularly permuted GTPase that catalyzes slow GTP hydrolysis, GTPase activity is stimulated by the 30S ribosomal subunit. This is Small ribosomal subunit biogenesis GTPase RsgA from Salmonella schwarzengrund (strain CVM19633).